A 217-amino-acid polypeptide reads, in one-letter code: Elongation factor Ts (217 aa).

The involved in Mg(2+) ion dislocation from EF-Tu stretch occupies residues 80–83; that stretch reads TDFV.

It belongs to the EF-Ts family.

It localises to the cytoplasm. Functionally, associates with the EF-Tu.GDP complex and induces the exchange of GDP to GTP. It remains bound to the aminoacyl-tRNA.EF-Tu.GTP complex up to the GTP hydrolysis stage on the ribosome. This chain is Elongation factor Ts, found in Carboxydothermus hydrogenoformans (strain ATCC BAA-161 / DSM 6008 / Z-2901).